A 1191-amino-acid chain; its full sequence is Homeodomain-interacting protein kinase 3 (1191 aa).

K27 is covalently cross-linked (Glycyl lysine isopeptide (Lys-Gly) (interchain with G-Cter in SUMO2)). Positions 197 to 525 (YEVLDFLGRG…PIETLNHPFV (329 aa)) constitute a Protein kinase domain. Residues 203 to 211 (LGRGTFGQV) and K226 each bind ATP. D322 (proton acceptor) is an active-site residue. Phosphotyrosine is present on Y359. Positions 766–920 (QNRSNSLQNT…NSMSDDEQES (155 aa)) are interaction with AR. The interaction with FAS stretch occupies residues 774–867 (NTNVPHSAFI…SPRPSLRECK (94 aa)). Positions 801-828 (TQDNHTSEGEARTCHEASVRQDSSVSDK) are disordered. Residues 802–828 (QDNHTSEGEARTCHEASVRQDSSVSDK) are compositionally biased toward basic and acidic residues. Positions 846–856 (ITISSDTDDEE) are interaction with UBL1. Positions 888 to 905 (SSPDSTLSTSSSGQSSPS) are enriched in low complexity. Disordered regions lie at residues 888–960 (SSPD…TCAG) and 993–1022 (TCQP…KPTS). Over residues 1008–1022 (NQPSASAARQQKPTS) the composition is skewed to polar residues.

The protein belongs to the protein kinase superfamily. CMGC Ser/Thr protein kinase family. HIPK subfamily. Interacts with Nkx1-2. Interacts with FAS and DAXX. Probably part of a complex consisting of HIPK3, FAS and FADD. Interacts with UBL1/SUMO-1. Interacts with and stabilizes ligand-bound androgen receptor (AR). In terms of processing, autophosphorylated. Autophosphorylation is not required for catalytic activity. May be sumoylated.

It localises to the nucleus. The enzyme catalyses L-seryl-[protein] + ATP = O-phospho-L-seryl-[protein] + ADP + H(+). It catalyses the reaction L-threonyl-[protein] + ATP = O-phospho-L-threonyl-[protein] + ADP + H(+). In terms of biological role, seems to negatively regulate apoptosis by promoting FADD phosphorylation. Enhances androgen receptor-mediated transcription. May act as a transcriptional corepressor for NK homeodomain transcription factors. The chain is Homeodomain-interacting protein kinase 3 (Hipk3) from Rattus norvegicus (Rat).